A 72-amino-acid polypeptide reads, in one-letter code: U1-sicaritoxin-Sdo1a (72 aa).

Residues 1 to 24 (MMKKFTCFLLCATILCAIFCVSVA) form the signal peptide. The propeptide occupies 25-41 (EKFHKMKSDIERDETPM). Intrachain disulfides connect cysteine 43-cysteine 61, cysteine 50-cysteine 64, and cysteine 60-cysteine 69.

In terms of tissue distribution, expressed by the venom gland.

It localises to the secreted. The sequence is that of U1-sicaritoxin-Sdo1a from Hexophthalma dolichocephala (Afrotropical spider).